Consider the following 881-residue polypeptide: MLRSLLLLAPLVGAAVIGARDHSQECPGYKATNIREGRDSLTADLTLAGKPCNTYGTDLKNLKLLVEYQTDKRLHVKIYDADEEVYQVPESVLPRVDGKGGSSKKSALKFDYQANPFSFKVKRGGEVLFDTSGSNLIFQSQYLSLRTWLPEDPNLYGLGEHTDSLRLETTNYTRTLWNRDAYAIPEKTNLYGTHPVYYDHRGQHGTHGVFLLNSNGMDIKIDKTKDGKQYLEYNTLGGVFDFYFFTGATPKDASIEYAKVVGLPAMQSYWTFGFHQCRYGYRDVFEVAEVVYNYSQAKIPLETMWTDIDYMDRRRVFTLDPERFPLEKMRELVSYLHNHNQHYIVMVDPAVSVSDNVGYNDGMEQGIFLQTQNGSLYKGAVWPGVTAYPDWFHPDIQKYWNDQFAKFFDPKTGVDIDGLWIDMNEAANFCPYPCSDPEGYARDNDLPPAAPPVRPSNPRPLPGFPGDFQPSSSSKRSTKGSKVGLPNRDLINPPYMIRNEAGSLSNKTINTDIIHAGEGYAEYDTHNLYGTMMSSASRNAMQHRRPGVRPLVITRSTYAGAGAHVGHWLGDNISEWSKYRISISQMLAFASMFQVPMIGSDVCGFGGNTTEELCARWARLGAFYTFFRNHNEITGIPQEFYRWPTVAESARKAIDIRYRLLDYIYTAFHRQTQTGEPFLQPMFYLYPKDKNTFSNQLQFFYGDAILVSPVTDGSQTSVDAYFPDDIFYDWHTGAALRGRGANVTLSNIDVTEIPIHIRGGSIIPVRSESAMTTTELRKKGFELIIAPGLDGTASGSLYLDDGDSIEPRATLELEFTYRKGHLQVKGKFGFRTEVKINAVTLLGQSAPASKSADVASLDSGRQAVTIKTSLDLTGPSEIDLS.

A signal peptide spans M1 to A14. N-linked (GlcNAc...) asparagine glycans are attached at residues N171, N293, and N373. Residue D422 is the Nucleophile of the active site. E425 is an active-site residue. A disordered region spans residues Y440 to L485. Over residues P448–G463 the composition is skewed to pro residues. N506 is a glycosylation site (N-linked (GlcNAc...) asparagine). Residue D571 is the Proton donor of the active site. N-linked (GlcNAc...) asparagine glycans are attached at residues N572, N608, and N742.

This sequence belongs to the glycosyl hydrolase 31 family.

The protein resides in the secreted. The enzyme catalyses Hydrolysis of terminal, non-reducing (1-&gt;4)-linked alpha-D-glucose residues with release of alpha-D-glucose.. It catalyses the reaction Hydrolysis of terminal, non-reducing beta-D-glucosyl residues with release of beta-D-glucose.. In terms of biological role, glucosidase involved in the degradation of cellulosic biomass. Has both alpha- and beta-glucosidase activity. This chain is Probable alpha/beta-glucosidase agdC (agdC), found in Aspergillus fumigatus (strain CBS 144.89 / FGSC A1163 / CEA10) (Neosartorya fumigata).